The primary structure comprises 256 residues: Membrane-anchored junction protein (256 aa).

Residues 1–232 (MSLKPFTYPF…HSSPPPPKEP (232 aa)) lie on the Nuclear side of the membrane. Disordered stretches follow at residues 143–197 (KRKL…TPAS) and 211–235 (HGLQGLVVPPLQHSSPPPPKEPGAR). Over residues 164–173 (ETSSEASSNK) the composition is skewed to polar residues. Residues 175–184 (PLKESKRSTD) are compositionally biased toward basic and acidic residues. Residues 233 to 251 (GARGFLGFLSALFPFRYFF) form a helical membrane-spanning segment. The Perinuclear space portion of the chain corresponds to 252 to 256 (KKSGQ).

The protein belongs to the MAJIN family. In terms of assembly, component of the MAJIN-TERB1-TERB2 complex, composed of MAJIN, TERB1 and TERB2. As to expression, specifically expressed in germline tissues.

It is found in the nucleus inner membrane. Its subcellular location is the chromosome. It localises to the telomere. Meiosis-specific telomere-associated protein involved in meiotic telomere attachment to the nucleus inner membrane, a crucial step for homologous pairing and synapsis. Component of the MAJIN-TERB1-TERB2 complex, which promotes telomere cap exchange by mediating attachment of telomeric DNA to the inner nuclear membrane and replacement of the protective cap of telomeric chromosomes: in early meiosis, the MAJIN-TERB1-TERB2 complex associates with telomeric DNA and the shelterin/telosome complex. During prophase, the complex matures and promotes release of the shelterin/telosome complex from telomeric DNA. In the complex, MAJIN acts as the anchoring subunit to the nucleus inner membrane. MAJIN shows DNA-binding activity, possibly for the stabilization of telomere attachment on the nucleus inner membrane. In Mus musculus (Mouse), this protein is Membrane-anchored junction protein.